A 469-amino-acid chain; its full sequence is 3-isopropylmalate dehydratase large subunit (469 aa).

3 residues coordinate [4Fe-4S] cluster: Cys347, Cys408, and Cys411.

Belongs to the aconitase/IPM isomerase family. LeuC type 1 subfamily. Heterodimer of LeuC and LeuD. [4Fe-4S] cluster is required as a cofactor.

It catalyses the reaction (2R,3S)-3-isopropylmalate = (2S)-2-isopropylmalate. The protein operates within amino-acid biosynthesis; L-leucine biosynthesis; L-leucine from 3-methyl-2-oxobutanoate: step 2/4. Catalyzes the isomerization between 2-isopropylmalate and 3-isopropylmalate, via the formation of 2-isopropylmaleate. The sequence is that of 3-isopropylmalate dehydratase large subunit from Haemophilus influenzae (strain 86-028NP).